A 1062-amino-acid chain; its full sequence is MAGNEWINGYLEAILDSQAQGIEETQQKPQASVNLREGDGQYFNPTKYFVEEVVTGVDETDLHRTWLKVVATRNSRERNSRLENMCWRIWHLTRKKKQLEWEDSQRIANRRLEREQGRRDATEDLSEDLSEGEKGDGLGEIVQPETPRRQLQRNLSNLEIWSDDKKENRLYVVLISLHGLVRGENMELGSDSDTGGQVKYVVELARALARMPGVYRVDLFTRQICSSEVDWSYAEPTEMLTTAEDCDGDETGESSGAYIIRIPFGPRDKYLNKEILWPFVQEFVDGALAHILNMSKVLGEQIGKGKPVWPYVIHGHYADAGDSAALLSGALNVPMVLTGHSLGRNKLEQLLKQGRQSKEDINSTYKIKRRIEAEELSLDAAELVITSTRQEIDEQWGLYDGFDVKLEKVLRARARRGVNCHGRFMPRMAVIPPGMDFTNVEVQEDTPEGDGDLASLVGGTEGSSPKAVPTIWSEVMRFFTNPHKPMILALSRPDPKKNITTLLKAFGECRPLRELANLTLIMGNRDDIDELSSGNASVLTTVLKLIDKYDLYGSVAYPKHHKQSDVPDIYRLAANTKGVFINPALVEPFGLTLIEAAAHGLPMVATKNGGPVDIHRALHNGLLVDPHDQEAIANALLKLVSEKNLWHECRINGWKNIHLFSWPEHCRTYLTRIAACRMRHPQWQTDADEVAAQDDEFSLNDSLKDVQDMSLRLSMDGDKPSLNGSLEPNSADPVKQIMSRMRTPEIKSKPELQGKKQSDNLGSKYPVLRRRERLVVLAVDCYDNEGAPDEKAMVPMIQNIIKAVRSDPQMAKNSGFAISTSMPLDELTRFLKSAKIQVSEFDTLICSSGSEVYYPGGEEGKLLPDPDYSSHIDYRWGMEGLKNTVWKLMNTTAVGGEARNKGSPSLIQEDQASSNSHCVAYMIKDRSKVMRVDDLRQKLRLRGLRCHPMYCRNSTRMQIVPLLASRSQALRYLFVRWRLNVANMYVVVGDRGDTDYEELISGTHKTVIVKGLVTLGSDALLRSTDLRDDIVPSESPFIGFLKVDSPVKEITDIFKQLSKATA.

The span at 113–122 shows a compositional bias: basic and acidic residues; it reads EREQGRRDAT. A disordered region spans residues 113–141; the sequence is EREQGRRDATEDLSEDLSEGEKGDGLGEI. Serine 126, serine 130, and serine 156 each carry phosphoserine. Positions 715-735 are disordered; that stretch reads MDGDKPSLNGSLEPNSADPVK.

The protein belongs to the glycosyltransferase 1 family. Homodimer or homotetramer.

It carries out the reaction beta-D-fructose 6-phosphate + UDP-alpha-D-glucose = sucrose 6(F)-phosphate + UDP + H(+). It functions in the pathway glycan biosynthesis; sucrose biosynthesis; sucrose from D-fructose 6-phosphate and UDP-alpha-D-glucose: step 1/2. With respect to regulation, activity is regulated by phosphorylation and moderated by concentration of metabolites and light. In terms of biological role, plays a role in photosynthetic sucrose synthesis by catalyzing the rate-limiting step of sucrose biosynthesis from UDP-glucose and fructose- 6-phosphate. Involved in the regulation of carbon partitioning in the leaves of plants. May regulate the synthesis of sucrose and therefore play a major role as a limiting factor in the export of photoassimilates out of the leaf. Plays a role for sucrose availability that is essential for plant growth and fiber elongation. The protein is Probable sucrose-phosphate synthase 3 (SPS3) of Arabidopsis thaliana (Mouse-ear cress).